The primary structure comprises 89 residues: Small ribosomal subunit protein uS15 (89 aa).

The protein belongs to the universal ribosomal protein uS15 family. In terms of assembly, part of the 30S ribosomal subunit. Forms a bridge to the 50S subunit in the 70S ribosome, contacting the 23S rRNA.

One of the primary rRNA binding proteins, it binds directly to 16S rRNA where it helps nucleate assembly of the platform of the 30S subunit by binding and bridging several RNA helices of the 16S rRNA. In terms of biological role, forms an intersubunit bridge (bridge B4) with the 23S rRNA of the 50S subunit in the ribosome. This Geobacillus stearothermophilus (Bacillus stearothermophilus) protein is Small ribosomal subunit protein uS15.